The chain runs to 383 residues: Chorismate synthase (383 aa).

Arginine 39 and arginine 45 together coordinate NADP(+). FMN is bound by residues 128–130, glycine 291, 306–310, and arginine 332; these read RAS and KPIAT.

This sequence belongs to the chorismate synthase family. In terms of assembly, homotetramer. The cofactor is FMNH2.

It catalyses the reaction 5-O-(1-carboxyvinyl)-3-phosphoshikimate = chorismate + phosphate. It participates in metabolic intermediate biosynthesis; chorismate biosynthesis; chorismate from D-erythrose 4-phosphate and phosphoenolpyruvate: step 7/7. Its function is as follows. Catalyzes the anti-1,4-elimination of the C-3 phosphate and the C-6 proR hydrogen from 5-enolpyruvylshikimate-3-phosphate (EPSP) to yield chorismate, which is the branch point compound that serves as the starting substrate for the three terminal pathways of aromatic amino acid biosynthesis. This reaction introduces a second double bond into the aromatic ring system. In Thermus thermophilus (strain ATCC 27634 / DSM 579 / HB8), this protein is Chorismate synthase.